The following is a 347-amino-acid chain: Phosphoribosylformylglycinamidine cyclo-ligase (347 aa).

Belongs to the AIR synthase family.

The protein resides in the cytoplasm. It catalyses the reaction 2-formamido-N(1)-(5-O-phospho-beta-D-ribosyl)acetamidine + ATP = 5-amino-1-(5-phospho-beta-D-ribosyl)imidazole + ADP + phosphate + H(+). It participates in purine metabolism; IMP biosynthesis via de novo pathway; 5-amino-1-(5-phospho-D-ribosyl)imidazole from N(2)-formyl-N(1)-(5-phospho-D-ribosyl)glycinamide: step 2/2. This is Phosphoribosylformylglycinamidine cyclo-ligase from Syntrophus aciditrophicus (strain SB).